Consider the following 586-residue polypeptide: Asparagine synthetase [glutamine-hydrolyzing] (586 aa).

The For GATase activity role is filled by cysteine 2. The 184-residue stretch at 2–185 folds into the Glutamine amidotransferase type-2 domain; sequence CGILAVLGVV…PGHLYSSKTG (184 aa). L-glutamine contacts are provided by residues 50–54, 75–77, and aspartate 98; these read RLAII and NGE. An Asparagine synthetase domain is found at 193–516; sequence PPWFSETVPS…PQDSARETVP (324 aa). Residues leucine 231, isoleucine 267, and 341–342 each bind ATP; that span reads SG.

The enzyme catalyses L-aspartate + L-glutamine + ATP + H2O = L-asparagine + L-glutamate + AMP + diphosphate + H(+). It participates in amino-acid biosynthesis; L-asparagine biosynthesis; L-asparagine from L-aspartate (L-Gln route): step 1/1. Its function is as follows. Essential for nitrogen assimilation, distribution and remobilization within the plant via the phloem. This chain is Asparagine synthetase [glutamine-hydrolyzing] (ASN1), found in Zea mays (Maize).